Here is a 708-residue protein sequence, read N- to C-terminus: RNA-directed RNA polymerase catalytic subunit (708 aa).

The RdRp catalytic domain occupies 281-467; sequence RIKEIGMKNQ…GLNVSQKKSF (187 aa).

The RNA polymerase is composed of three subunits: PB1, PB2 and PA.

The catalysed reaction is RNA(n) + a ribonucleoside 5'-triphosphate = RNA(n+1) + diphosphate. Its function is as follows. RNA-dependent RNA polymerase which is responsible for replication and transcription of virus segments. Binds the promoter sequence of the encapsidated viral RNA. Displays an endonuclease activity involved in cap-stealing. Cleaves cellular pre-mRNA to generate primers for viral transcription. The chain is RNA-directed RNA polymerase catalytic subunit from Infectious salmon anemia virus (isolate Atlantic salmon/Norway/810/9/99) (ISAV).